A 128-amino-acid chain; its full sequence is Flagellar basal body rod protein FlgB (128 aa).

Belongs to the flagella basal body rod proteins family. As to quaternary structure, the basal body constitutes a major portion of the flagellar organelle and consists of a number of rings mounted on a central rod. In Gram-negative bacteria, at least four rings, L, P, S and M are present, whereas Gram-positive bacteria lack the L and P rings. The rod consists of about 26 subunits of FlgG in the distal portion, and FlgB, FlgC and FlgF build up the proximal portion of the rod with about 6 subunits each. Rod assembly occurs by export via the flagellum-specific pathway of its constituent proteins and by their incorporation into the rod structure in the probable order of FlgB, FlgC, FlgF and FlgG. Another protein, FliE, also assembles onto the stable rod structure.

The protein resides in the bacterial flagellum basal body. Its function is as follows. Structural component of flagellum, the bacterial motility apparatus. Part of the rod structure of flagellar basal body. The polypeptide is Flagellar basal body rod protein FlgB (Cereibacter sphaeroides (strain ATCC 17029 / ATH 2.4.9) (Rhodobacter sphaeroides)).